A 229-amino-acid chain; its full sequence is UPF0758 protein Fjoh_0413 (229 aa).

The 123-residue stretch at 107–229 folds into the MPN domain; that stretch reads KITSSKDAFT…YYSFVDEGIF (123 aa). Positions 178, 180, and 191 each coordinate Zn(2+). The short motif at 178–191 is the JAMM motif element; sequence HNHPSGELNPSQAD.

The protein belongs to the UPF0758 family.

The protein is UPF0758 protein Fjoh_0413 of Flavobacterium johnsoniae (strain ATCC 17061 / DSM 2064 / JCM 8514 / BCRC 14874 / CCUG 350202 / NBRC 14942 / NCIMB 11054 / UW101) (Cytophaga johnsonae).